The sequence spans 445 residues: C-type lectin domain family 4 member M (445 aa).

Topologically, residues 1-49 (MSDSKEPRVQQLGLLEEDPTTSGIRLFPRDFQFQQIHGHKSSTGCLGHG) are cytoplasmic. The Endocytosis signal motif lies at 14–15 (LL). Residues 50 to 70 (PLVLQLLSFTLLAGVLVAILV) form a helical; Signal-anchor for type II membrane protein membrane-spanning segment. The Extracellular portion of the chain corresponds to 71 to 445 (QVSKVPSSLS…KKPAVCFRDE (375 aa)). N-linked (GlcNAc...) asparagine glycosylation is present at Asn-92. 9 tandem repeats follow at residues 108-130 (KLQE…PEKS), 131-151 (KLQE…ELPE), 154-176 (KLQE…PEKS), 177-199 (KLQE…PEKS), 200-222 (KLQE…PEKS), 223-245 (KLQE…PEKS), 246-268 (KLQE…PEKS), 269-291 (ELQE…PDQS), and 292-314 (KQQQ…CRHC). A 9 X approximate tandem repeats region spans residues 108–315 (KLQEIYQELT…AFERLCRHCP (208 aa)). Disulfide bonds link Cys-311–Cys-441, Cys-314–Cys-325, Cys-342–Cys-435, and Cys-414–Cys-427. The C-type lectin domain maps to 320-436 (FFQGNCYFMS…CDIDNYWICK (117 aa)). The Ca(2+) site is built by Glu-405, Asn-407, Ser-409, Glu-412, Asn-423, and Asp-424. A glycan (N-linked (GlcNAc...) asparagine) is linked at Asn-407.

As to quaternary structure, homotetramer.

It localises to the membrane. Probable pathogen-recognition receptor involved in peripheral immune surveillance in liver. May mediate the endocytosis of pathogens which are subsequently degraded in lysosomal compartments. Probably recognizes in a calcium-dependent manner high mannose N-linked oligosaccharides in a variety of pathogen antigens. Is a receptor for ICAM3, probably by binding to mannose-like carbohydrates. This Pan troglodytes (Chimpanzee) protein is C-type lectin domain family 4 member M (CLEC4M).